Reading from the N-terminus, the 430-residue chain is Trigger factor (430 aa).

The region spanning 157–242 (GDLVALETWS…AVEVSEPVLP (86 aa)) is the PPIase FKBP-type domain.

It belongs to the FKBP-type PPIase family. Tig subfamily.

It localises to the cytoplasm. It catalyses the reaction [protein]-peptidylproline (omega=180) = [protein]-peptidylproline (omega=0). Involved in protein export. Acts as a chaperone by maintaining the newly synthesized protein in an open conformation. Functions as a peptidyl-prolyl cis-trans isomerase. In Xanthomonas campestris pv. campestris (strain B100), this protein is Trigger factor.